A 182-amino-acid polypeptide reads, in one-letter code: UPF0149 protein PM1723 (182 aa).

The protein belongs to the UPF0149 family.

This Pasteurella multocida (strain Pm70) protein is UPF0149 protein PM1723.